A 222-amino-acid chain; its full sequence is uncharacterized protein (222 aa).

This is an uncharacterized protein from Archaeoglobus fulgidus (strain ATCC 49558 / DSM 4304 / JCM 9628 / NBRC 100126 / VC-16).